The primary structure comprises 256 residues: Type III pantothenate kinase (256 aa).

Asp-6–Val-13 serves as a coordination point for ATP. Gly-107–Ile-110 is a substrate binding site. Asp-109 serves as the catalytic Proton acceptor. Residue Asp-129 coordinates K(+). Thr-132 lines the ATP pocket. Thr-184 provides a ligand contact to substrate.

This sequence belongs to the type III pantothenate kinase family. As to quaternary structure, homodimer. The cofactor is NH4(+). K(+) is required as a cofactor.

Its subcellular location is the cytoplasm. It carries out the reaction (R)-pantothenate + ATP = (R)-4'-phosphopantothenate + ADP + H(+). The protein operates within cofactor biosynthesis; coenzyme A biosynthesis; CoA from (R)-pantothenate: step 1/5. In terms of biological role, catalyzes the phosphorylation of pantothenate (Pan), the first step in CoA biosynthesis. The sequence is that of Type III pantothenate kinase from Bifidobacterium longum (strain DJO10A).